Here is a 437-residue protein sequence, read N- to C-terminus: Probable N-acetylmuramidase (437 aa).

A signal peptide spans methionine 1 to alanine 57. Disordered stretches follow at residues serine 217–threonine 244, serine 291–threonine 319, and alanine 367–alanine 392. Positions threonine 243–leucine 286 constitute a LysM 1 domain. The segment covering serine 291–serine 317 has biased composition (low complexity). The LysM 2 domain maps to threonine 319–valine 362. A LysM 3 domain is found at serine 393 to isoleucine 436.

This sequence belongs to the glycosyl hydrolase 73 family.

The protein localises to the secreted. It carries out the reaction Hydrolysis of (1-&gt;4)-beta-linkages between N-acetylmuramic acid and N-acetyl-D-glucosamine residues in a peptidoglycan and between N-acetyl-D-glucosamine residues in chitodextrins.. In terms of biological role, hydrolyzes the cell wall of L.lactis and M.lysodeikticus. Required for cell separation during growth. This Lactococcus lactis subsp. cremoris (Streptococcus cremoris) protein is Probable N-acetylmuramidase (acmA).